The sequence spans 551 residues: MVETGHHHQHPPAPAAAGHPPVPSMAMARNMGTTWPPAEQLHHLQYCIHSNPSWHETVVLAFQHYIVMLGTTVLIANTLVSPMGGDPGDKARVIQTILFMSGINTLLQTLIGTRLPTVMGVSFAYVLPVLSIIRDYNNGQFDSEKQRFRHTMRTVQGSLIISSFVNIIIGYGQAWGNLIRIFSPIIVVPVVSVVSLGLFLRGFPLLANCVEIGLPMLILLIITQQYLKHAFSRISMILERYALLVCLAIIWAFAAILTVSGAYNNVSTATKQSCRTDRAFLMSSAPWIRIPYPFQWGTPIFKASHVFGMFGAAIVASAESTGVFFAASRLAGATAPPAHVVSRSIGLQGIGVLLEGIFGSITGNTASVENVGLLGLTRIGSRRVVQVSTFFMIFFSIFGKFGAFFASIPLPIFAGVYCILLGIVVAVGISFIQFTDTNSMRNMYVIGVSLFLSLSIAQYFLANTSRAGYGPVRTAGGWFNDILNTIFASAPLVATILATILDNTLEARHASDDARGIPWWKPFQHRNGDGRNDEFYSMPLRINELMPTRFL.

The interval 1–30 is disordered; it reads MVETGHHHQHPPAPAAAGHPPVPSMAMARN. 12 consecutive transmembrane segments (helical) span residues 56–76, 92–111, 117–136, 158–178, 179–199, 202–222, 242–262, 306–326, 390–410, 412–432, 442–462, and 481–501; these read ETVV…VLIA, RVIQ…QTLI, TVMG…IRDY, SLII…WGNL, IRIF…LGLF, GFPL…LLII, ALLV…VSGA, VFGM…VFFA, FFMI…SIPL, IFAG…ISFI, NMYV…YFLA, and DILN…ATIL.

The protein belongs to the nucleobase:cation symporter-2 (NCS2) (TC 2.A.40) family. In terms of tissue distribution, expressed in the apical meristem 4 days after imbibition (DAI). Expressed in the major veins of rosette leaves and pedicels. Expressed in the root central cylinder, root meristems, root tips and lateral root primordia.

Its subcellular location is the membrane. This Arabidopsis thaliana (Mouse-ear cress) protein is Nucleobase-ascorbate transporter 3 (NAT3).